Here is a 513-residue protein sequence, read N- to C-terminus: GMP synthase [glutamine-hydrolyzing] (513 aa).

One can recognise a Glutamine amidotransferase type-1 domain in the interval 3–200 (SVLVLDFGSQ…LINIAGIRPD (198 aa)). C80 acts as the Nucleophile in catalysis. Residues H174 and E176 contribute to the active site. The region spanning 201–388 (WSSKSFIEHQ…LGIPEDILMR (188 aa)) is the GMPS ATP-PPase domain. 228 to 234 (SGGVDST) contacts ATP.

In terms of assembly, homodimer.

The enzyme catalyses XMP + L-glutamine + ATP + H2O = GMP + L-glutamate + AMP + diphosphate + 2 H(+). It functions in the pathway purine metabolism; GMP biosynthesis; GMP from XMP (L-Gln route): step 1/1. Catalyzes the synthesis of GMP from XMP. The polypeptide is GMP synthase [glutamine-hydrolyzing] (Chlorobium luteolum (strain DSM 273 / BCRC 81028 / 2530) (Pelodictyon luteolum)).